Consider the following 133-residue polypeptide: Protein PROTON GRADIENT REGULATION 5, chloroplastic (133 aa).

A chloroplast-targeting transit peptide spans 1 to 60 (MAAASISAIGCNQTLIGTSFYGGWGSSISGEDYQTMLSKTVAPPQQARVSRKAIRAVPMM).

This sequence belongs to the PGR5 family. In terms of assembly, interacts with PGRL1A and PGRL1B. Post-translationally, disulfide bonds; Cys-11 and Cys-105 are probably involved in the formation of disulfide bridges with 'Cys-300' and 'Cys-303' of PGRL1A. 'Cys-272' and 'Cys-275' of PGRL1A may also be used to form the disulfide bridges, but in this case the cyclic electron flow is lost.

Its subcellular location is the plastid. It is found in the chloroplast thylakoid membrane. Its function is as follows. Critical for growth under fluctuating-light conditions. Involved in the regulation of the cyclic electron flow (CEF) around Photosystem I. Essential for the reduction of PGRL1A by ferredoxin and for photoprotection. Contributes to maximize photosynthesis efficiency after a long dark adaptation via the regulation of non-photochemical quenching (NPQ); acts independently from DLDG1. Promotes the induction of steady-state proton motive force (pmf) and energy-dependent quenching (qE). In Arabidopsis thaliana (Mouse-ear cress), this protein is Protein PROTON GRADIENT REGULATION 5, chloroplastic.